The sequence spans 434 residues: UDP-N-acetylmuramate--L-alanine ligase (434 aa).

An ATP-binding site is contributed by 108–114; it reads GSHGKTT.

This sequence belongs to the MurCDEF family.

The protein resides in the cytoplasm. It catalyses the reaction UDP-N-acetyl-alpha-D-muramate + L-alanine + ATP = UDP-N-acetyl-alpha-D-muramoyl-L-alanine + ADP + phosphate + H(+). The protein operates within cell wall biogenesis; peptidoglycan biosynthesis. In terms of biological role, cell wall formation. The sequence is that of UDP-N-acetylmuramate--L-alanine ligase from Geobacillus thermodenitrificans (strain NG80-2).